A 78-amino-acid chain; its full sequence is Beta-defensin 29 (78 aa).

An N-terminal signal peptide occupies residues 1–23 (MPVTKPYFVTVAVLLILVDKTTG). 3 cysteine pairs are disulfide-bonded: Cys40-Cys67, Cys47-Cys61, and Cys51-Cys68.

The protein belongs to the beta-defensin family.

The protein localises to the secreted. In terms of biological role, has antibacterial activity. The chain is Beta-defensin 29 (Defb29) from Rattus norvegicus (Rat).